The primary structure comprises 345 residues: 4-hydroxy-2-oxovalerate aldolase (345 aa).

Positions 8–260 (ITVHDMTLRD…ETGVDVFKIQ (253 aa)) constitute a Pyruvate carboxyltransferase domain. A substrate-binding site is contributed by 16 to 17 (RD). A Mn(2+)-binding site is contributed by D17. The active-site Proton acceptor is H20. S170 and H199 together coordinate substrate. Residues H199 and H201 each contribute to the Mn(2+) site. Residue Y290 participates in substrate binding.

This sequence belongs to the 4-hydroxy-2-oxovalerate aldolase family.

The enzyme catalyses (S)-4-hydroxy-2-oxopentanoate = acetaldehyde + pyruvate. This is 4-hydroxy-2-oxovalerate aldolase from Leptothrix cholodnii (strain ATCC 51168 / LMG 8142 / SP-6) (Leptothrix discophora (strain SP-6)).